Here is a 528-residue protein sequence, read N- to C-terminus: Lanosterol 14-alpha demethylase (528 aa).

Cys-470 is a heme binding site.

Belongs to the cytochrome P450 family. It depends on heme as a cofactor.

It localises to the membrane. It carries out the reaction a 14alpha-methyl steroid + 3 reduced [NADPH--hemoprotein reductase] + 3 O2 = a Delta(14) steroid + formate + 3 oxidized [NADPH--hemoprotein reductase] + 4 H2O + 4 H(+). The enzyme catalyses a 14alpha-methyl steroid + reduced [NADPH--hemoprotein reductase] + O2 = a 14alpha-hydroxymethyl steroid + oxidized [NADPH--hemoprotein reductase] + H2O + H(+). It catalyses the reaction a 14alpha-hydroxymethyl steroid + reduced [NADPH--hemoprotein reductase] + O2 = a 14alpha-formyl steroid + oxidized [NADPH--hemoprotein reductase] + 2 H2O + H(+). The catalysed reaction is a 14alpha-formyl steroid + reduced [NADPH--hemoprotein reductase] + O2 = a Delta(14) steroid + formate + oxidized [NADPH--hemoprotein reductase] + H2O + 2 H(+). It carries out the reaction lanosterol + 3 reduced [NADPH--hemoprotein reductase] + 3 O2 = 4,4-dimethyl-5alpha-cholesta-8,14,24-trien-3beta-ol + formate + 3 oxidized [NADPH--hemoprotein reductase] + 4 H2O + 4 H(+). The enzyme catalyses lanosterol + reduced [NADPH--hemoprotein reductase] + O2 = 32-hydroxylanosterol + oxidized [NADPH--hemoprotein reductase] + H2O + H(+). It catalyses the reaction 32-hydroxylanosterol + reduced [NADPH--hemoprotein reductase] + O2 = 32-oxolanosterol + oxidized [NADPH--hemoprotein reductase] + 2 H2O + H(+). The catalysed reaction is 32-oxolanosterol + reduced [NADPH--hemoprotein reductase] + O2 = 4,4-dimethyl-5alpha-cholesta-8,14,24-trien-3beta-ol + formate + oxidized [NADPH--hemoprotein reductase] + H2O + 2 H(+). It carries out the reaction eburicol + 3 reduced [NADPH--hemoprotein reductase] + 3 O2 = 14-demethyleburicol + formate + 3 oxidized [NADPH--hemoprotein reductase] + 4 H2O + 4 H(+). The enzyme catalyses eburicol + reduced [NADPH--hemoprotein reductase] + O2 = 32-hydroxyeburicol + oxidized [NADPH--hemoprotein reductase] + H2O + H(+). It catalyses the reaction 32-hydroxyeburicol + reduced [NADPH--hemoprotein reductase] + O2 = 32-oxoeburicol + oxidized [NADPH--hemoprotein reductase] + 2 H2O + H(+). The catalysed reaction is 32-oxoeburicol + reduced [NADPH--hemoprotein reductase] + O2 = 14-demethyleburicol + formate + oxidized [NADPH--hemoprotein reductase] + H2O + 2 H(+). It participates in steroid biosynthesis; zymosterol biosynthesis; zymosterol from lanosterol: step 1/6. Its function is as follows. Sterol 14alpha-demethylase that plays a critical role in the third module of ergosterol biosynthesis pathway, being ergosterol the major sterol component in fungal membranes that participates in a variety of functions. The third module or late pathway involves the ergosterol synthesis itself through consecutive reactions that mainly occur in the endoplasmic reticulum (ER) membrane. In filamentous fungi, during the initial step of this module, lanosterol (lanosta-8,24-dien-3beta-ol) can be metabolized to eburicol. Sterol 14alpha-demethylase catalyzes the three-step oxidative removal of the 14alpha-methyl group (C-32) of both these sterols in the form of formate, and converts eburicol and lanosterol to 14-demethyleburicol (4,4,24-trimethylergosta-8,14,24(28)-trienol) and 4,4-dimethyl-5alpha-cholesta-8,14,24-trien-3beta-ol, respectively, which are further metabolized by other enzymes in the pathway to ergosterol. Can also use substrates not intrinsic to fungi, such as 24,25-dihydrolanosterol (DHL), producing 4,4-dimethyl-8,14-cholestadien-3-beta-ol, but at lower rates than the endogenous substrates. The polypeptide is Lanosterol 14-alpha demethylase (ERG11) (Candida tropicalis (Yeast)).